The sequence spans 449 residues: Capsid protein (449 aa).

The segment at 1 to 43 (MARRARRPRGRFYSFRRGRWHHLKRLRRRYKFRHRRRQRYRRR) is DNA-binding. Residues 6 to 47 (RRPRGRFYSFRRGRWHHLKRLRRRYKFRHRRRQRYRRRAFRK) are nuclear localization signals.

Belongs to the gyrovirus capsid protein family. As to quaternary structure, homomultimer (Potential). Interacts with Rep; this interaction relocates Rep into the nucleus.

The protein localises to the host nucleus. Its subcellular location is the virion. Self-assembles to form the virion icosahedral capsid with a T=1 symmetry. This very small capsid (25 nm in diameter) allows the virus to be very stable in the environment and resistant to some disinfectants, including detergents. Essential for the initial attachment to host receptors. After attachment, the virus is endocytosed and traffics to the nucleus. The capsid protein binds and transports the viral genome and Rep across the nuclear envelope. The chain is Capsid protein (VP1) from Gallus gallus (Chicken).